The primary structure comprises 185 residues: Elongation factor P (185 aa).

The protein belongs to the elongation factor P family.

It is found in the cytoplasm. It participates in protein biosynthesis; polypeptide chain elongation. In terms of biological role, involved in peptide bond synthesis. Stimulates efficient translation and peptide-bond synthesis on native or reconstituted 70S ribosomes in vitro. Probably functions indirectly by altering the affinity of the ribosome for aminoacyl-tRNA, thus increasing their reactivity as acceptors for peptidyl transferase. This is Elongation factor P from Staphylococcus epidermidis (strain ATCC 35984 / DSM 28319 / BCRC 17069 / CCUG 31568 / BM 3577 / RP62A).